Reading from the N-terminus, the 206-residue chain is Large ribosomal subunit protein uL22m (206 aa).

Residues 1-40 constitute a mitochondrion transit peptide; it reads MAAAVLGQLGALWIHNLRSRGKLALGVLPQSYIHTSASLD.

It belongs to the universal ribosomal protein uL22 family. Component of the mitochondrial large ribosomal subunit (mt-LSU). Mature mammalian 55S mitochondrial ribosomes consist of a small (28S) and a large (39S) subunit. The 28S small subunit contains a 12S ribosomal RNA (12S mt-rRNA) and 30 different proteins. The 39S large subunit contains a 16S rRNA (16S mt-rRNA), a copy of mitochondrial valine transfer RNA (mt-tRNA(Val)), which plays an integral structural role, and 52 different proteins.

It is found in the mitochondrion. The chain is Large ribosomal subunit protein uL22m (MRPL22) from Homo sapiens (Human).